The chain runs to 290 residues: Glycine--tRNA ligase alpha subunit (290 aa).

This sequence belongs to the class-II aminoacyl-tRNA synthetase family. In terms of assembly, tetramer of two alpha and two beta subunits.

Its subcellular location is the cytoplasm. The enzyme catalyses tRNA(Gly) + glycine + ATP = glycyl-tRNA(Gly) + AMP + diphosphate. This chain is Glycine--tRNA ligase alpha subunit, found in Syntrophobacter fumaroxidans (strain DSM 10017 / MPOB).